Reading from the N-terminus, the 383-residue chain is Probable indole-3-pyruvate monooxygenase YUCCA10 (383 aa).

Residue 9–14 (GAGPAG) coordinates FAD. 177 to 182 (GGGNSG) is a binding site for NADP(+).

It belongs to the FMO family. It depends on FAD as a cofactor.

The catalysed reaction is indole-3-pyruvate + NADPH + O2 + H(+) = (indol-3-yl)acetate + CO2 + NADP(+) + H2O. It functions in the pathway plant hormone metabolism; auxin biosynthesis. Functionally, involved in auxin biosynthesis. The polypeptide is Probable indole-3-pyruvate monooxygenase YUCCA10 (YUC10) (Arabidopsis thaliana (Mouse-ear cress)).